The sequence spans 85 residues: Large ribosomal subunit protein bL27 (85 aa).

Residues 1-25 (MAHKKAGGSSRNGRDSHSKRLGVKH) are disordered.

It belongs to the bacterial ribosomal protein bL27 family.

This is Large ribosomal subunit protein bL27 from Buchnera aphidicola subsp. Baizongia pistaciae (strain Bp).